Here is a 369-residue protein sequence, read N- to C-terminus: Glutamate 5-kinase (369 aa).

Residue Lys9 coordinates ATP. 3 residues coordinate substrate: Ser49, Asp136, and Asn148. ATP-binding positions include 168–169 and 210–216; these read TD and TGGMLTK. The region spanning 275-355 is the PUA domain; sequence QGEIYVDQGA…KGVVIHRDDW (81 aa).

This sequence belongs to the glutamate 5-kinase family.

Its subcellular location is the cytoplasm. It carries out the reaction L-glutamate + ATP = L-glutamyl 5-phosphate + ADP. It participates in amino-acid biosynthesis; L-proline biosynthesis; L-glutamate 5-semialdehyde from L-glutamate: step 1/2. Its function is as follows. Catalyzes the transfer of a phosphate group to glutamate to form L-glutamate 5-phosphate. The sequence is that of Glutamate 5-kinase from Streptococcus gordonii (strain Challis / ATCC 35105 / BCRC 15272 / CH1 / DL1 / V288).